Here is a 588-residue protein sequence, read N- to C-terminus: uncharacterized protein (588 aa).

7 helical membrane passes run 14-34 (FLLF…KGIV), 49-69 (AVIL…IVSA), 78-98 (IFLC…GILG), 184-204 (ALVV…LVAI), 235-255 (VPIA…AVIG), 257-274 (VISS…SYQE), and 275-292 (SSFY…SIYD). Serine 486 carries the post-translational modification Phosphoserine. The disordered stretch occupies residues 566 to 588 (RKGSVNGSDQESQKGVSRNVDIV). The segment covering 570-581 (VNGSDQESQKGV) has biased composition (polar residues).

The protein localises to the membrane. This is an uncharacterized protein from Arabidopsis thaliana (Mouse-ear cress).